A 160-amino-acid chain; its full sequence is UPF0479 membrane protein YER190C-B (160 aa).

2 helical membrane passes run 39–59 (IVFC…KVLQ) and 136–156 (VPMI…ISQH).

It belongs to the UPF0479 family.

It localises to the membrane. This Saccharomyces cerevisiae (strain ATCC 204508 / S288c) (Baker's yeast) protein is UPF0479 membrane protein YER190C-B.